The chain runs to 805 residues: Phenylalanine--tRNA ligase beta subunit (805 aa).

Positions 39–154 (SEGLKKVVVG…DDATPGDPVF (116 aa)) constitute a tRNA-binding domain. A B5 domain is found at 410–485 (VQPTTVTIDL…RLYGYDNLPA (76 aa)). Residues D463, D469, E472, and E473 each coordinate Mg(2+). The 94-residue stretch at 712–805 (SKFPSITRDV…LTDELGAEIR (94 aa)) folds into the FDX-ACB domain.

It belongs to the phenylalanyl-tRNA synthetase beta subunit family. Type 1 subfamily. In terms of assembly, tetramer of two alpha and two beta subunits. Requires Mg(2+) as cofactor.

The protein localises to the cytoplasm. The catalysed reaction is tRNA(Phe) + L-phenylalanine + ATP = L-phenylalanyl-tRNA(Phe) + AMP + diphosphate + H(+). This chain is Phenylalanine--tRNA ligase beta subunit, found in Lactiplantibacillus plantarum (strain ATCC BAA-793 / NCIMB 8826 / WCFS1) (Lactobacillus plantarum).